Here is a 154-residue protein sequence, read N- to C-terminus: SsrA-binding protein (154 aa).

This sequence belongs to the SmpB family.

The protein localises to the cytoplasm. In terms of biological role, required for rescue of stalled ribosomes mediated by trans-translation. Binds to transfer-messenger RNA (tmRNA), required for stable association of tmRNA with ribosomes. tmRNA and SmpB together mimic tRNA shape, replacing the anticodon stem-loop with SmpB. tmRNA is encoded by the ssrA gene; the 2 termini fold to resemble tRNA(Ala) and it encodes a 'tag peptide', a short internal open reading frame. During trans-translation Ala-aminoacylated tmRNA acts like a tRNA, entering the A-site of stalled ribosomes, displacing the stalled mRNA. The ribosome then switches to translate the ORF on the tmRNA; the nascent peptide is terminated with the 'tag peptide' encoded by the tmRNA and targeted for degradation. The ribosome is freed to recommence translation, which seems to be the essential function of trans-translation. The polypeptide is SsrA-binding protein (Gluconacetobacter diazotrophicus (strain ATCC 49037 / DSM 5601 / CCUG 37298 / CIP 103539 / LMG 7603 / PAl5)).